Consider the following 307-residue polypeptide: Regulating synaptic membrane exocytosis protein 3 (307 aa).

Residues 86 to 120 are disordered; it reads STETGIAVEMRSRVTRQGSRESTDGSTNSNSSEGT. Residues 109–119 are compositionally biased toward polar residues; that stretch reads DGSTNSNSSEG. Residues 155–273 form the C2 domain; the sequence is PMGDVHIAIM…DLSAAVTGWY (119 aa). Phosphoserine is present on residues Ser-294 and Ser-297.

As to quaternary structure, binds PPFIA3. Does not bind RAB3.

Its subcellular location is the synapse. Functionally, regulates synaptic membrane exocytosis. The sequence is that of Regulating synaptic membrane exocytosis protein 3 (Rims3) from Mus musculus (Mouse).